Here is a 163-residue protein sequence, read N- to C-terminus: 2-C-methyl-D-erythritol 2,4-cyclodiphosphate synthase (163 aa).

Asp-12 and His-14 together coordinate a divalent metal cation. 4-CDP-2-C-methyl-D-erythritol 2-phosphate is bound by residues 12–14 (DVH) and 38–39 (HS). His-46 lines the a divalent metal cation pocket. 4-CDP-2-C-methyl-D-erythritol 2-phosphate contacts are provided by residues 60–62 (DIG), 136–139 (TTSE), Phe-143, and Arg-146.

This sequence belongs to the IspF family. In terms of assembly, homotrimer. A divalent metal cation serves as cofactor.

It catalyses the reaction 4-CDP-2-C-methyl-D-erythritol 2-phosphate = 2-C-methyl-D-erythritol 2,4-cyclic diphosphate + CMP. It participates in isoprenoid biosynthesis; isopentenyl diphosphate biosynthesis via DXP pathway; isopentenyl diphosphate from 1-deoxy-D-xylulose 5-phosphate: step 4/6. In terms of biological role, involved in the biosynthesis of isopentenyl diphosphate (IPP) and dimethylallyl diphosphate (DMAPP), two major building blocks of isoprenoid compounds. Catalyzes the conversion of 4-diphosphocytidyl-2-C-methyl-D-erythritol 2-phosphate (CDP-ME2P) to 2-C-methyl-D-erythritol 2,4-cyclodiphosphate (ME-CPP) with a corresponding release of cytidine 5-monophosphate (CMP). The protein is 2-C-methyl-D-erythritol 2,4-cyclodiphosphate synthase of Xanthomonas campestris pv. campestris (strain 8004).